Here is a 536-residue protein sequence, read N- to C-terminus: Adenine deaminase (536 aa).

Positions 1 to 24 (MTPSPHDLLHCGMNSQDRDETNGD) are disordered.

Belongs to the metallo-dependent hydrolases superfamily. Adenine deaminase family. Mn(2+) is required as a cofactor.

The catalysed reaction is adenine + H2O + H(+) = hypoxanthine + NH4(+). This chain is Adenine deaminase, found in Deinococcus radiodurans (strain ATCC 13939 / DSM 20539 / JCM 16871 / CCUG 27074 / LMG 4051 / NBRC 15346 / NCIMB 9279 / VKM B-1422 / R1).